A 210-amino-acid polypeptide reads, in one-letter code: Silenced mating-type protein ALPHA2 (210 aa).

An N-acetylmethionine modification is found at M1. Positions 1 to 102 (MNKIPIKDLL…RSIENDRSNY (102 aa)) are N-terminal domain. The interval 103-128 (QLTQKNKSADGLVFNVVTQDMINKST) is flexible linker. The homeobox; TALE-type DNA-binding region spans 129–191 (KPYRGHRFTK…NRRRKEKTIT (63 aa)). A C-terminal tail region spans residues 190–210 (ITIAPELADLLSGEPLAKKKE).

The protein belongs to the TALE/M-ATYP homeobox family.

It localises to the nucleus. Mating type proteins are sequence specific DNA-binding proteins that act as master switches in yeast differentiation by controlling gene expression in a cell type-specific fashion. Silenced copy of ALPHA2 at HML. This Saccharomyces cerevisiae (strain ATCC 204508 / S288c) (Baker's yeast) protein is Silenced mating-type protein ALPHA2 (HMLALPHA2).